Reading from the N-terminus, the 485-residue chain is Glutamyl-tRNA(Gln) amidotransferase subunit A (485 aa).

Residues lysine 76 and serine 151 each act as charge relay system in the active site. Serine 175 (acyl-ester intermediate) is an active-site residue.

It belongs to the amidase family. GatA subfamily. As to quaternary structure, heterotrimer of A, B and C subunits.

It carries out the reaction L-glutamyl-tRNA(Gln) + L-glutamine + ATP + H2O = L-glutaminyl-tRNA(Gln) + L-glutamate + ADP + phosphate + H(+). Its function is as follows. Allows the formation of correctly charged Gln-tRNA(Gln) through the transamidation of misacylated Glu-tRNA(Gln) in organisms which lack glutaminyl-tRNA synthetase. The reaction takes place in the presence of glutamine and ATP through an activated gamma-phospho-Glu-tRNA(Gln). This chain is Glutamyl-tRNA(Gln) amidotransferase subunit A, found in Chlorobium luteolum (strain DSM 273 / BCRC 81028 / 2530) (Pelodictyon luteolum).